A 349-amino-acid chain; its full sequence is DNA replication and repair protein RecF (349 aa).

30–37 is a binding site for ATP; the sequence is GKNGSGKT.

Belongs to the RecF family.

Its subcellular location is the cytoplasm. In terms of biological role, the RecF protein is involved in DNA metabolism; it is required for DNA replication and normal SOS inducibility. RecF binds preferentially to single-stranded, linear DNA. It also seems to bind ATP. The chain is DNA replication and repair protein RecF from Francisella tularensis subsp. holarctica (strain FTNF002-00 / FTA).